Reading from the N-terminus, the 262-residue chain is Acyl-[acyl-carrier-protein]--UDP-N-acetylglucosamine O-acyltransferase (262 aa).

Belongs to the transferase hexapeptide repeat family. LpxA subfamily. In terms of assembly, homotrimer.

The protein localises to the cytoplasm. It catalyses the reaction a (3R)-hydroxyacyl-[ACP] + UDP-N-acetyl-alpha-D-glucosamine = a UDP-3-O-[(3R)-3-hydroxyacyl]-N-acetyl-alpha-D-glucosamine + holo-[ACP]. It functions in the pathway glycolipid biosynthesis; lipid IV(A) biosynthesis; lipid IV(A) from (3R)-3-hydroxytetradecanoyl-[acyl-carrier-protein] and UDP-N-acetyl-alpha-D-glucosamine: step 1/6. Its function is as follows. Involved in the biosynthesis of lipid A, a phosphorylated glycolipid that anchors the lipopolysaccharide to the outer membrane of the cell. This Salmonella arizonae (strain ATCC BAA-731 / CDC346-86 / RSK2980) protein is Acyl-[acyl-carrier-protein]--UDP-N-acetylglucosamine O-acyltransferase.